The sequence spans 943 residues: Zinc finger BED domain-containing protein 39 (943 aa).

Residues methionine 1–threonine 99 form a disordered region. Basic and acidic residues predominate over residues proline 12–valine 21. Residues serine 50–serine 72 are compositionally biased toward low complexity. Residues proline 73–glutamine 85 show a composition bias toward basic and acidic residues. A BED-type; degenerate zinc finger spans residues asparagine 184 to phenylalanine 235. 2 disordered regions span residues tyrosine 242 to serine 315 and arginine 328 to proline 348. Positions threonine 262–alanine 276 are enriched in polar residues. Over residues serine 277–glycine 292 the composition is skewed to low complexity. Polar residues predominate over residues arginine 328 to proline 338.

Expressed in distal tip cells and in germline cells.

It is found in the nucleus. The protein localises to the cytoplasm. Regulates the timing and orientation of distal tip cell migration during gonadal development. May act in parallel to cacn-1 and Rac GTPases to control the anterior and posterior migration of distal tip cells. In Caenorhabditis elegans, this protein is Zinc finger BED domain-containing protein 39.